The sequence spans 367 residues: BTB/POZ domain-containing protein Tiwaz (367 aa).

2 disordered regions span residues 16-46 and 62-87; these read LTVD…PRDL and SSPT…SSVT. Basic and acidic residues predominate over residues 28-45; the sequence is CDMDRERERDVKALEPRD. Residues 135–205 enclose the BTB domain; sequence APVHIDVGGT…MRNSRLLIAE (71 aa). Positions 240-261 are disordered; the sequence is GNYLVAPPTPPARHIKTSPRTS.

Functions with the transcription factor TfAP-2 to regulate octopamine neuronal signaling pathways that control behaviors such as male aggression, male mating, and the initiation of feeding. Required for TfAP-2 transcriptional activity in octopaminergic neurons. Functions with TfAP-2 to regulate expression of genes which are involved in promoting octopamine production and secretion from octopaminergic neurons, such as Tbh and Vmat. Octopamine then modulates feeding and male aggression by regulating the expression of the satiation hormone Dsk in insulin-producing cells (IPCs). Functions with octopamine and Dsk as part of a negative feedback loop to prevent overeating; acts with TfAP-2 to regulate octopamine signaling pathways that initiate feeding, then octopamine activates expression of Dsk which inhibits consummatory behavior. May also be involved in negatively regulating nociception in larvae to prevent spontaneous pain and hyperalgesia. The sequence is that of BTB/POZ domain-containing protein Tiwaz from Drosophila melanogaster (Fruit fly).